Consider the following 633-residue polypeptide: Phosphomethylpyrimidine synthase (633 aa).

Substrate is bound by residues Asn245, Met274, Tyr303, His339, 359–361 (SRG), 400–403 (DGLR), and Glu439. His443 is a Zn(2+) binding site. Position 466 (Tyr466) interacts with substrate. Residue His507 participates in Zn(2+) binding. 3 residues coordinate [4Fe-4S] cluster: Cys587, Cys590, and Cys595.

The protein belongs to the ThiC family. As to quaternary structure, homodimer. It depends on [4Fe-4S] cluster as a cofactor.

It catalyses the reaction 5-amino-1-(5-phospho-beta-D-ribosyl)imidazole + S-adenosyl-L-methionine = 4-amino-2-methyl-5-(phosphooxymethyl)pyrimidine + CO + 5'-deoxyadenosine + formate + L-methionine + 3 H(+). Its pathway is cofactor biosynthesis; thiamine diphosphate biosynthesis. Its function is as follows. Catalyzes the synthesis of the hydroxymethylpyrimidine phosphate (HMP-P) moiety of thiamine from aminoimidazole ribotide (AIR) in a radical S-adenosyl-L-methionine (SAM)-dependent reaction. This chain is Phosphomethylpyrimidine synthase, found in Neisseria meningitidis serogroup C (strain 053442).